Reading from the N-terminus, the 359-residue chain is Protein RecA (359 aa).

Residue 77–84 (GPESSGKT) coordinates ATP.

It belongs to the RecA family.

Its subcellular location is the cytoplasm. Can catalyze the hydrolysis of ATP in the presence of single-stranded DNA, the ATP-dependent uptake of single-stranded DNA by duplex DNA, and the ATP-dependent hybridization of homologous single-stranded DNAs. It interacts with LexA causing its activation and leading to its autocatalytic cleavage. This chain is Protein RecA, found in Paramagnetospirillum magneticum (strain ATCC 700264 / AMB-1) (Magnetospirillum magneticum).